Here is a 351-residue protein sequence, read N- to C-terminus: Photosystem II D2 protein (351 aa).

Residues 39–59 (CAFLALGGWLTGTTFVTSWYT) form a helical membrane-spanning segment. Residue His-116 coordinates chlorophyll a. Residues 123–139 (GFMLRQFEIARLVGIRP) traverse the membrane as a helical segment. Residues Gln-128 and Asn-141 each coordinate pheophytin a. A helical transmembrane segment spans residues 151-164 (VFVSVFLMYPLGQS). His-196 contacts chlorophyll a. The helical transmembrane segment at 206 to 226 (GALLCAIHGATVENTLFEDGD) threads the bilayer. Residues His-213 and Phe-260 each contribute to the a plastoquinone site. His-213 is a Fe cation binding site. His-267 provides a ligand contact to Fe cation. A helical transmembrane segment spans residues 277–293 (GLWMSAVGIVGLALNLR).

It belongs to the reaction center PufL/M/PsbA/D family. PSII is composed of 1 copy each of membrane proteins PsbA, PsbB, PsbC, PsbD, PsbE, PsbF, PsbH, PsbI, PsbJ, PsbK, PsbL, PsbM, PsbT, PsbX, PsbY, PsbZ, Psb30/Ycf12, peripheral proteins PsbO, CyanoQ (PsbQ), PsbU, PsbV and a large number of cofactors. It forms dimeric complexes. It depends on The D1/D2 heterodimer binds P680, chlorophylls that are the primary electron donor of PSII, and subsequent electron acceptors. It shares a non-heme iron and each subunit binds pheophytin, quinone, additional chlorophylls, carotenoids and lipids. There is also a Cl(-1) ion associated with D1 and D2, which is required for oxygen evolution. The PSII complex binds additional chlorophylls, carotenoids and specific lipids. as a cofactor.

The protein localises to the cellular thylakoid membrane. The enzyme catalyses 2 a plastoquinone + 4 hnu + 2 H2O = 2 a plastoquinol + O2. Its function is as follows. Photosystem II (PSII) is a light-driven water:plastoquinone oxidoreductase that uses light energy to abstract electrons from H(2)O, generating O(2) and a proton gradient subsequently used for ATP formation. It consists of a core antenna complex that captures photons, and an electron transfer chain that converts photonic excitation into a charge separation. The D1/D2 (PsbA/PsbD) reaction center heterodimer binds P680, the primary electron donor of PSII as well as several subsequent electron acceptors. D2 is needed for assembly of a stable PSII complex. This is Photosystem II D2 protein from Nostoc punctiforme (strain ATCC 29133 / PCC 73102).